The primary structure comprises 211 residues: Uridine kinase (211 aa).

12-19 contributes to the ATP binding site; that stretch reads GGSGSGKT.

Belongs to the uridine kinase family.

It is found in the cytoplasm. It catalyses the reaction uridine + ATP = UMP + ADP + H(+). It carries out the reaction cytidine + ATP = CMP + ADP + H(+). The protein operates within pyrimidine metabolism; CTP biosynthesis via salvage pathway; CTP from cytidine: step 1/3. Its pathway is pyrimidine metabolism; UMP biosynthesis via salvage pathway; UMP from uridine: step 1/1. The protein is Uridine kinase of Geobacillus sp. (strain WCH70).